The sequence spans 315 residues: WD repeat domain-containing protein 83 (315 aa).

WD repeat units lie at residues C23–T62, G65–K104, G107–I146, E151–D188, Y189–E228, V233–K272, and V275–N313.

This sequence belongs to the WD repeat MORG1 family.

The protein resides in the cytoplasm. Its function is as follows. Molecular scaffold protein for various multimeric protein complexes. Acts as a module in the assembly of a multicomponent scaffold for the ERK pathway, linking ERK responses to specific agonists. Also involved in response to hypoxia by acting as a negative regulator of HIF1A/HIF-1-alpha. The protein is WD repeat domain-containing protein 83 (wdr83) of Danio rerio (Zebrafish).